A 377-amino-acid polypeptide reads, in one-letter code: MFGTPSSSPSFGTPSSTPAFGTSSPAFGTPSATPAFGTPSNPSFSSGGFGSSLFSSPFSSQQPQQQQQQQQQQQPSSLFQQQPSSNFGFQSPFNNTAQQQQQTPFPNAQLTTQMAPVAPIPYSLADRDVQAIIEAYKEDPTNPKYAFQHLLFSVTEPQYRVKPAAVSDIMWAEAMSKLEGMDSTERERLWPQLVQGFKDLSQRLKLQDEVLVSDRDRIKTTQSNVKMLQRHLQASTFPSIERLRQKEQSLQRRMLRVMRIIEGLEGKGFRLPLTKGEAELSEKLTAITRQVKGPGAELSRRVQSLQTISRAQANSIAAGSSLYLPGSTKIDEQSLIDMQEVLQQETEAIGRLGNVLKRDMRDMEIMVAEDTEMALDS.

The segment covering 1–18 (MFGTPSSSPSFGTPSSTP) has biased composition (low complexity). Positions 1-104 (MFGTPSSSPS…NTAQQQQQTP (104 aa)) are disordered. 7 consecutive repeat copies span residues 2–3 (FG), 11–12 (FG), 20–21 (FG), 27–28 (FG), 36–37 (FG), 49–50 (FG), and 87–88 (FG). Positions 2 to 88 (FGTPSSSPSF…FQQQPSSNFG (87 aa)) are 7 X 2 AA repeats of F-G. Residues 19 to 32 (AFGTSSPAFGTPSA) show a composition bias toward polar residues. The segment covering 39–104 (PSNPSFSSGG…NTAQQQQQTP (66 aa)) has biased composition (low complexity).

Belongs to the NUP54 family. As to quaternary structure, part of the nuclear pore complex (NPC). The NPC has an eight-fold symmetrical structure comprising a central transport channel and two rings, the cytoplasmic and nuclear rings, to which eight filaments are attached. The cytoplasmic filaments have loose ends, while the nuclear filaments are joined in a distal ring, forming a nuclear basket. NPCs are highly dynamic in configuration and composition, and can be devided in 3 subcomplexes, the NUP62 subcomplex, the NUP107-160 subcomplex and the NUP93 subcomplex, containing approximately 30 different nucleoporin proteins.

Its subcellular location is the nucleus envelope. The protein resides in the nucleus. The protein localises to the nuclear pore complex. The polypeptide is Nuclear pore complex protein NUP54 (Arabidopsis thaliana (Mouse-ear cress)).